The chain runs to 176 residues: Large ribosomal subunit protein uL6 (176 aa).

The protein belongs to the universal ribosomal protein uL6 family. Part of the 50S ribosomal subunit.

Its function is as follows. This protein binds to the 23S rRNA, and is important in its secondary structure. It is located near the subunit interface in the base of the L7/L12 stalk, and near the tRNA binding site of the peptidyltransferase center. This Thiobacillus denitrificans (strain ATCC 25259 / T1) protein is Large ribosomal subunit protein uL6.